A 239-amino-acid polypeptide reads, in one-letter code: 1-(5-phosphoribosyl)-5-[(5-phosphoribosylamino)methylideneamino] imidazole-4-carboxamide isomerase (239 aa).

Residue aspartate 9 is the Proton acceptor of the active site. The Proton donor role is filled by aspartate 131.

Belongs to the HisA/HisF family.

The protein localises to the cytoplasm. The enzyme catalyses 1-(5-phospho-beta-D-ribosyl)-5-[(5-phospho-beta-D-ribosylamino)methylideneamino]imidazole-4-carboxamide = 5-[(5-phospho-1-deoxy-D-ribulos-1-ylimino)methylamino]-1-(5-phospho-beta-D-ribosyl)imidazole-4-carboxamide. The protein operates within amino-acid biosynthesis; L-histidine biosynthesis; L-histidine from 5-phospho-alpha-D-ribose 1-diphosphate: step 4/9. The polypeptide is 1-(5-phosphoribosyl)-5-[(5-phosphoribosylamino)methylideneamino] imidazole-4-carboxamide isomerase (Bacteroides thetaiotaomicron (strain ATCC 29148 / DSM 2079 / JCM 5827 / CCUG 10774 / NCTC 10582 / VPI-5482 / E50)).